Here is a 543-residue protein sequence, read N- to C-terminus: Aluminum-activated malate transporter 14 (543 aa).

6 helical membrane-spanning segments follow: residues 56–76 (VGVSLTLVSLLYLMEPLFKGI), 80–100 (AIWAVMTVVVVLEFSAGATLC), 106–126 (GLGTLIAGSLAFFIEFVANDS), 129–149 (IFRAIFIGAAVFIIGALITYL), 164–184 (LIFLLTFNLITVSSYRVDTVI), and 191–211 (FYTIAMGVGICLLMSLLVFPI). A disordered region spans residues 416-438 (DTNEAASYQNTGTPRGERMSRFG). Positions 419–428 (EAASYQNTGT) are enriched in polar residues. Residues 445-472 (RLRADTLERRSAAATNERKILRQQLSRI) adopt a coiled-coil conformation.

The protein belongs to the aromatic acid exporter (TC 2.A.85) family.

It is found in the membrane. Malate transporter. This is Aluminum-activated malate transporter 14 (ALMT14) from Arabidopsis thaliana (Mouse-ear cress).